A 338-amino-acid chain; its full sequence is NAD kinase (338 aa).

The active-site Proton acceptor is D66. Residues 66–67 (DG), R71, 141–142 (ND), K152, D171, 182–187 (TAYAFS), and A206 contribute to the NAD(+) site. The tract at residues 317-338 (GDAGVAGTEPDKPGERDGKAGA) is disordered. Positions 325–338 (EPDKPGERDGKAGA) are enriched in basic and acidic residues.

The protein belongs to the NAD kinase family. A divalent metal cation serves as cofactor.

The protein resides in the cytoplasm. It catalyses the reaction NAD(+) + ATP = ADP + NADP(+) + H(+). Functionally, involved in the regulation of the intracellular balance of NAD and NADP, and is a key enzyme in the biosynthesis of NADP. Catalyzes specifically the phosphorylation on 2'-hydroxyl of the adenosine moiety of NAD to yield NADP. This is NAD kinase from Bifidobacterium longum subsp. infantis (strain ATCC 15697 / DSM 20088 / JCM 1222 / NCTC 11817 / S12).